The following is a 205-amino-acid chain: Holliday junction branch migration complex subunit RuvA (205 aa).

Residues 1–64 (MIGRLRGIIL…EDAQLLYGFN (64 aa)) form a domain I region. The domain II stretch occupies residues 65-143 (DKQERALFRE…GLNGDLFNNT (79 aa)). The flexible linker stretch occupies residues 144–156 (GDIQLPASNSSQI). Residues 157–205 (SDADIEAEAASALVALGYKPQEASRLVSKIAKPGADCETLIRDALRAAL) form a domain III region.

Belongs to the RuvA family. In terms of assembly, homotetramer. Forms an RuvA(8)-RuvB(12)-Holliday junction (HJ) complex. HJ DNA is sandwiched between 2 RuvA tetramers; dsDNA enters through RuvA and exits via RuvB. An RuvB hexamer assembles on each DNA strand where it exits the tetramer. Each RuvB hexamer is contacted by two RuvA subunits (via domain III) on 2 adjacent RuvB subunits; this complex drives branch migration. In the full resolvosome a probable DNA-RuvA(4)-RuvB(12)-RuvC(2) complex forms which resolves the HJ.

The protein resides in the cytoplasm. Its function is as follows. The RuvA-RuvB-RuvC complex processes Holliday junction (HJ) DNA during genetic recombination and DNA repair, while the RuvA-RuvB complex plays an important role in the rescue of blocked DNA replication forks via replication fork reversal (RFR). RuvA specifically binds to HJ cruciform DNA, conferring on it an open structure. The RuvB hexamer acts as an ATP-dependent pump, pulling dsDNA into and through the RuvAB complex. HJ branch migration allows RuvC to scan DNA until it finds its consensus sequence, where it cleaves and resolves the cruciform DNA. This chain is Holliday junction branch migration complex subunit RuvA, found in Yersinia enterocolitica serotype O:8 / biotype 1B (strain NCTC 13174 / 8081).